The following is a 137-amino-acid chain: 2-iminobutanoate/2-iminopropanoate deaminase (137 aa).

S2 carries the post-translational modification N-acetylserine. 3 positions are modified to N6-succinyllysine: K13, K60, and K67. T74 is subject to Phosphothreonine. Residue S136 is modified to Phosphoserine.

This sequence belongs to the RutC family. Homotrimer. Interacts with YTHDF2. In terms of tissue distribution, expressed predominantly in liver and kidney. Lower levels in lung and brain.

Its subcellular location is the cytoplasm. It is found in the nucleus. The protein resides in the peroxisome. It localises to the mitochondrion. It carries out the reaction 2-iminobutanoate + H2O = 2-oxobutanoate + NH4(+). The catalysed reaction is 2-iminopropanoate + H2O = pyruvate + NH4(+). Its function is as follows. Catalyzes the hydrolytic deamination of enamine/imine intermediates that form during the course of normal metabolism. May facilitate the release of ammonia from these potentially toxic reactive metabolites, reducing their impact on cellular components. It may act on enamine/imine intermediates formed by several types of pyridoxal-5'-phosphate-dependent dehydratases including L-threonine dehydratase. In terms of biological role, also promotes endoribonucleolytic cleavage of some transcripts by promoting recruitment of the ribonuclease P/MRP complex. Acts by bridging YTHDF2 and the ribonuclease P/MRP complex. RIDA/HRSP12 binds to N6-methyladenosine (m6A)-containing mRNAs containing a 5'-GGUUC-3' motif: cooperative binding of RIDA/HRSP12 and YTHDF2 to such transcripts lead to recruitment of the ribonuclease P/MRP complex and subsequent endoribonucleolytic cleavage. This Homo sapiens (Human) protein is 2-iminobutanoate/2-iminopropanoate deaminase.